Consider the following 309-residue polypeptide: UDP-3-O-acyl-N-acetylglucosamine deacetylase (309 aa).

Zn(2+) contacts are provided by His78, His235, and Asp239. Residue His262 is the Proton donor of the active site.

It belongs to the LpxC family. It depends on Zn(2+) as a cofactor.

The enzyme catalyses a UDP-3-O-[(3R)-3-hydroxyacyl]-N-acetyl-alpha-D-glucosamine + H2O = a UDP-3-O-[(3R)-3-hydroxyacyl]-alpha-D-glucosamine + acetate. Its pathway is glycolipid biosynthesis; lipid IV(A) biosynthesis; lipid IV(A) from (3R)-3-hydroxytetradecanoyl-[acyl-carrier-protein] and UDP-N-acetyl-alpha-D-glucosamine: step 2/6. Functionally, catalyzes the hydrolysis of UDP-3-O-myristoyl-N-acetylglucosamine to form UDP-3-O-myristoylglucosamine and acetate, the committed step in lipid A biosynthesis. This is UDP-3-O-acyl-N-acetylglucosamine deacetylase from Syntrophotalea carbinolica (strain DSM 2380 / NBRC 103641 / GraBd1) (Pelobacter carbinolicus).